Here is a 355-residue protein sequence, read N- to C-terminus: UDP-N-acetylglucosamine--N-acetylmuramyl-(pentapeptide) pyrophosphoryl-undecaprenol N-acetylglucosamine transferase (355 aa).

UDP-N-acetyl-alpha-D-glucosamine is bound by residues T14–G16, N126, R162, S190, I243, A262–E267, and Q287.

Belongs to the glycosyltransferase 28 family. MurG subfamily.

The protein resides in the cell inner membrane. It carries out the reaction di-trans,octa-cis-undecaprenyl diphospho-N-acetyl-alpha-D-muramoyl-L-alanyl-D-glutamyl-meso-2,6-diaminopimeloyl-D-alanyl-D-alanine + UDP-N-acetyl-alpha-D-glucosamine = di-trans,octa-cis-undecaprenyl diphospho-[N-acetyl-alpha-D-glucosaminyl-(1-&gt;4)]-N-acetyl-alpha-D-muramoyl-L-alanyl-D-glutamyl-meso-2,6-diaminopimeloyl-D-alanyl-D-alanine + UDP + H(+). It functions in the pathway cell wall biogenesis; peptidoglycan biosynthesis. In terms of biological role, cell wall formation. Catalyzes the transfer of a GlcNAc subunit on undecaprenyl-pyrophosphoryl-MurNAc-pentapeptide (lipid intermediate I) to form undecaprenyl-pyrophosphoryl-MurNAc-(pentapeptide)GlcNAc (lipid intermediate II). The protein is UDP-N-acetylglucosamine--N-acetylmuramyl-(pentapeptide) pyrophosphoryl-undecaprenol N-acetylglucosamine transferase of Vibrio parahaemolyticus serotype O3:K6 (strain RIMD 2210633).